The following is a 195-amino-acid chain: FMN-dependent NADH:quinone oxidoreductase (195 aa).

Residues Ser-10, 16 to 18, 91 to 94, and 135 to 138 contribute to the FMN site; these read SQS, MYNF, and TRGG.

It belongs to the azoreductase type 1 family. As to quaternary structure, homodimer. It depends on FMN as a cofactor.

It catalyses the reaction 2 a quinone + NADH + H(+) = 2 a 1,4-benzosemiquinone + NAD(+). It carries out the reaction N,N-dimethyl-1,4-phenylenediamine + anthranilate + 2 NAD(+) = 2-(4-dimethylaminophenyl)diazenylbenzoate + 2 NADH + 2 H(+). Functionally, quinone reductase that provides resistance to thiol-specific stress caused by electrophilic quinones. Its function is as follows. Also exhibits azoreductase activity. Catalyzes the reductive cleavage of the azo bond in aromatic azo compounds to the corresponding amines. The sequence is that of FMN-dependent NADH:quinone oxidoreductase from Vibrio vulnificus (strain YJ016).